The primary structure comprises 353 residues: DNA polymerase IV (353 aa).

The region spanning Ile-6–Gly-187 is the UmuC domain. Mg(2+) contacts are provided by Asp-10 and Asp-105. Glu-106 is an active-site residue.

This sequence belongs to the DNA polymerase type-Y family. In terms of assembly, monomer. It depends on Mg(2+) as a cofactor.

The protein localises to the cytoplasm. The enzyme catalyses DNA(n) + a 2'-deoxyribonucleoside 5'-triphosphate = DNA(n+1) + diphosphate. Poorly processive, error-prone DNA polymerase involved in untargeted mutagenesis. Copies undamaged DNA at stalled replication forks, which arise in vivo from mismatched or misaligned primer ends. These misaligned primers can be extended by PolIV. Exhibits no 3'-5' exonuclease (proofreading) activity. May be involved in translesional synthesis, in conjunction with the beta clamp from PolIII. This is DNA polymerase IV from Pseudomonas syringae pv. tomato (strain ATCC BAA-871 / DC3000).